Consider the following 219-residue polypeptide: Thiamine-phosphate synthase (219 aa).

4-amino-2-methyl-5-(diphosphooxymethyl)pyrimidine-binding positions include 45–49 (QYREK) and N77. Mg(2+) contacts are provided by D78 and D97. Residue T116 coordinates 4-amino-2-methyl-5-(diphosphooxymethyl)pyrimidine. 142–144 (SFT) contributes to the 2-[(2R,5Z)-2-carboxy-4-methylthiazol-5(2H)-ylidene]ethyl phosphate binding site. A 4-amino-2-methyl-5-(diphosphooxymethyl)pyrimidine-binding site is contributed by K145. 2-[(2R,5Z)-2-carboxy-4-methylthiazol-5(2H)-ylidene]ethyl phosphate is bound by residues G173 and 193 to 194 (VT).

It belongs to the thiamine-phosphate synthase family. The cofactor is Mg(2+).

It catalyses the reaction 2-[(2R,5Z)-2-carboxy-4-methylthiazol-5(2H)-ylidene]ethyl phosphate + 4-amino-2-methyl-5-(diphosphooxymethyl)pyrimidine + 2 H(+) = thiamine phosphate + CO2 + diphosphate. It carries out the reaction 2-(2-carboxy-4-methylthiazol-5-yl)ethyl phosphate + 4-amino-2-methyl-5-(diphosphooxymethyl)pyrimidine + 2 H(+) = thiamine phosphate + CO2 + diphosphate. The enzyme catalyses 4-methyl-5-(2-phosphooxyethyl)-thiazole + 4-amino-2-methyl-5-(diphosphooxymethyl)pyrimidine + H(+) = thiamine phosphate + diphosphate. Its pathway is cofactor biosynthesis; thiamine diphosphate biosynthesis; thiamine phosphate from 4-amino-2-methyl-5-diphosphomethylpyrimidine and 4-methyl-5-(2-phosphoethyl)-thiazole: step 1/1. Functionally, condenses 4-methyl-5-(beta-hydroxyethyl)thiazole monophosphate (THZ-P) and 2-methyl-4-amino-5-hydroxymethyl pyrimidine pyrophosphate (HMP-PP) to form thiamine monophosphate (TMP). This chain is Thiamine-phosphate synthase, found in Caldicellulosiruptor bescii (strain ATCC BAA-1888 / DSM 6725 / KCTC 15123 / Z-1320) (Anaerocellum thermophilum).